Consider the following 443-residue polypeptide: Flavastacin (443 aa).

Residues 1-15 (MTRKLLILSGCLILA) form the signal peptide. Positions 16 to 91 (LNSCKSDMET…ANPDISTVER (76 aa)) are cleaved as a propeptide — activation peptide. Positions 92-289 (STIVSSFIKT…AGINHLYGPV (198 aa)) constitute a Peptidase M12A domain. Histidine 189 is a Zn(2+) binding site. The active site involves glutamate 190. Positions 193 and 199 each coordinate Zn(2+). The region spanning 297–440 (GTYTLTTSLA…PYTKQRFTLT (144 aa)) is the Ricin B-type lectin domain. An O-linked (Man...) serine glycan is attached at serine 355.

The cofactor is Zn(2+). Post-translationally, O-linked glycan consists of the Man, GlcNAc, GlcU, Glc, GlcU, Rha, Man heptasaccharide.

The enzyme catalyses Hydrolyzes polypeptides on the amino-side of Asp in -Xaa-|-Asp-. Acts very slowly on -Xaa-|-Glu.. Functionally, zinc metallendopeptidase that cleaves preferentially on N-terminal side of aspartate-containing substrates. This chain is Flavastacin, found in Elizabethkingia meningoseptica (Chryseobacterium meningosepticum).